The sequence spans 1448 residues: Sister chromatid cohesion protein PDS5 homolog B-A (1448 aa).

An HEAT repeat occupies L383–Y419. A compositionally biased stretch (polar residues) spans A1141 to V1155. Residues A1141–R1448 form a disordered region. Over residues S1156 to G1168 the composition is skewed to low complexity. A compositionally biased stretch (acidic residues) spans M1177–D1186. 3 stretches are compositionally biased toward basic and acidic residues: residues K1196–P1214, E1233–S1243, and W1264–L1273. Residues K1285–K1294 are compositionally biased toward basic residues. A DNA-binding region (a.T hook 1) is located at residues K1286–M1298. Residues P1324–N1341 show a composition bias toward acidic residues. A compositionally biased stretch (basic residues) spans R1346–P1356. 2 consecutive DNA-binding regions (a.T hook) follow at residues Q1374–V1386 and K1390–K1402. Over residues K1389–V1399 the composition is skewed to basic residues.

It belongs to the PDS5 family. In terms of assembly, interacts with the cohesin complex. Phosphorylated in mitotic cells.

Its subcellular location is the nucleus. In terms of biological role, plays a role in androgen-induced proliferative arrest. Required for maintenance of sister chromatid cohesion during mitosis. In Xenopus laevis (African clawed frog), this protein is Sister chromatid cohesion protein PDS5 homolog B-A (pds5b-a).